We begin with the raw amino-acid sequence, 67 residues long: Conotoxin Cal12.1p2 (67 aa).

Positions 1–21 (DLITNSYTRGKPRHVTSWRNL) are excised as a propeptide.

Post-translationally, contains 4 disulfide bonds. In terms of tissue distribution, expressed by the venom duct.

The protein resides in the secreted. This is Conotoxin Cal12.1p2 from Californiconus californicus (California cone).